Here is a 243-residue protein sequence, read N- to C-terminus: 1-(5-phosphoribosyl)-5-[(5-phosphoribosylamino)methylideneamino] imidazole-4-carboxamide isomerase (243 aa).

Catalysis depends on Asp-8, which acts as the Proton acceptor. The active-site Proton donor is the Asp-129.

It belongs to the HisA/HisF family.

It localises to the cytoplasm. It carries out the reaction 1-(5-phospho-beta-D-ribosyl)-5-[(5-phospho-beta-D-ribosylamino)methylideneamino]imidazole-4-carboxamide = 5-[(5-phospho-1-deoxy-D-ribulos-1-ylimino)methylamino]-1-(5-phospho-beta-D-ribosyl)imidazole-4-carboxamide. It functions in the pathway amino-acid biosynthesis; L-histidine biosynthesis; L-histidine from 5-phospho-alpha-D-ribose 1-diphosphate: step 4/9. The chain is 1-(5-phosphoribosyl)-5-[(5-phosphoribosylamino)methylideneamino] imidazole-4-carboxamide isomerase from Brucella anthropi (strain ATCC 49188 / DSM 6882 / CCUG 24695 / JCM 21032 / LMG 3331 / NBRC 15819 / NCTC 12168 / Alc 37) (Ochrobactrum anthropi).